We begin with the raw amino-acid sequence, 236 residues long: Phosphoribosylaminoimidazole-succinocarboxamide synthase (236 aa).

This sequence belongs to the SAICAR synthetase family.

It carries out the reaction 5-amino-1-(5-phospho-D-ribosyl)imidazole-4-carboxylate + L-aspartate + ATP = (2S)-2-[5-amino-1-(5-phospho-beta-D-ribosyl)imidazole-4-carboxamido]succinate + ADP + phosphate + 2 H(+). It functions in the pathway purine metabolism; IMP biosynthesis via de novo pathway; 5-amino-1-(5-phospho-D-ribosyl)imidazole-4-carboxamide from 5-amino-1-(5-phospho-D-ribosyl)imidazole-4-carboxylate: step 1/2. The polypeptide is Phosphoribosylaminoimidazole-succinocarboxamide synthase (Pseudomonas putida (strain GB-1)).